The primary structure comprises 338 residues: Glycerol-3-phosphate dehydrogenase [NAD(P)+] (338 aa).

The NADPH site is built by Ser-12, Trp-13, Lys-34, and Lys-110. Residues Lys-110, Gly-141, and Ser-143 each coordinate sn-glycerol 3-phosphate. Ala-145 lines the NADPH pocket. Sn-glycerol 3-phosphate contacts are provided by Lys-196, Asp-249, Ser-259, Arg-260, and Asn-261. The Proton acceptor role is filled by Lys-196. Arg-260 lines the NADPH pocket. Residues Val-284 and Glu-286 each coordinate NADPH.

The protein belongs to the NAD-dependent glycerol-3-phosphate dehydrogenase family.

Its subcellular location is the cytoplasm. The catalysed reaction is sn-glycerol 3-phosphate + NAD(+) = dihydroxyacetone phosphate + NADH + H(+). The enzyme catalyses sn-glycerol 3-phosphate + NADP(+) = dihydroxyacetone phosphate + NADPH + H(+). Its pathway is membrane lipid metabolism; glycerophospholipid metabolism. In terms of biological role, catalyzes the reduction of the glycolytic intermediate dihydroxyacetone phosphate (DHAP) to sn-glycerol 3-phosphate (G3P), the key precursor for phospholipid synthesis. This is Glycerol-3-phosphate dehydrogenase [NAD(P)+] from Ligilactobacillus salivarius (strain UCC118) (Lactobacillus salivarius).